The chain runs to 439 residues: 3-phosphoshikimate 1-carboxyvinyltransferase (439 aa).

Positions 29 and 34 each coordinate 3-phosphoshikimate. Lys-29 serves as a coordination point for phosphoenolpyruvate. 2 residues coordinate phosphoenolpyruvate: Gly-99 and Arg-128. Residues Ser-171, Ser-172, Gln-173, Ser-199, Asp-316, and Lys-343 each contribute to the 3-phosphoshikimate site. Position 173 (Gln-173) interacts with phosphoenolpyruvate. Asp-316 (proton acceptor) is an active-site residue. The phosphoenolpyruvate site is built by Arg-347, Arg-390, and Lys-416.

The protein belongs to the EPSP synthase family. As to quaternary structure, monomer.

Its subcellular location is the cytoplasm. It carries out the reaction 3-phosphoshikimate + phosphoenolpyruvate = 5-O-(1-carboxyvinyl)-3-phosphoshikimate + phosphate. The protein operates within metabolic intermediate biosynthesis; chorismate biosynthesis; chorismate from D-erythrose 4-phosphate and phosphoenolpyruvate: step 6/7. Functionally, catalyzes the transfer of the enolpyruvyl moiety of phosphoenolpyruvate (PEP) to the 5-hydroxyl of shikimate-3-phosphate (S3P) to produce enolpyruvyl shikimate-3-phosphate and inorganic phosphate. This is 3-phosphoshikimate 1-carboxyvinyltransferase from Deinococcus radiodurans (strain ATCC 13939 / DSM 20539 / JCM 16871 / CCUG 27074 / LMG 4051 / NBRC 15346 / NCIMB 9279 / VKM B-1422 / R1).